The primary structure comprises 334 residues: Nucleoid-associated protein PMI0825 (334 aa).

Belongs to the YejK family.

It localises to the cytoplasm. The protein resides in the nucleoid. This is Nucleoid-associated protein PMI0825 from Proteus mirabilis (strain HI4320).